A 336-amino-acid polypeptide reads, in one-letter code: tRNA N6-adenosine threonylcarbamoyltransferase (336 aa).

Fe cation is bound by residues H114 and H118. Residues 136 to 140 (LVSGG), D169, G182, D186, and N275 each bind substrate. D301 provides a ligand contact to Fe cation.

The protein belongs to the KAE1 / TsaD family. Requires Fe(2+) as cofactor.

It localises to the cytoplasm. The enzyme catalyses L-threonylcarbamoyladenylate + adenosine(37) in tRNA = N(6)-L-threonylcarbamoyladenosine(37) in tRNA + AMP + H(+). Its function is as follows. Required for the formation of a threonylcarbamoyl group on adenosine at position 37 (t(6)A37) in tRNAs that read codons beginning with adenine. Is involved in the transfer of the threonylcarbamoyl moiety of threonylcarbamoyl-AMP (TC-AMP) to the N6 group of A37, together with TsaE and TsaB. TsaD likely plays a direct catalytic role in this reaction. The protein is tRNA N6-adenosine threonylcarbamoyltransferase of Streptococcus sanguinis (strain SK36).